We begin with the raw amino-acid sequence, 770 residues long: Elongation factor G, mitochondrial (770 aa).

Residues 1–24 constitute a mitochondrion transit peptide; it reads MLKLSFRSLTSRLPRLSTLVVRGY. The tr-type G domain occupies 57-353; that stretch reads KQIRNIGISA…AVCDYLPNPS (297 aa). Residues 66-73, 151-155, and 205-208 each bind GTP; these read AHIDSGKT, DTPGH, and NKMD.

Belongs to the TRAFAC class translation factor GTPase superfamily. Classic translation factor GTPase family. EF-G/EF-2 subfamily.

It localises to the mitochondrion. It functions in the pathway protein biosynthesis; polypeptide chain elongation. Mitochondrial GTPase that catalyzes the GTP-dependent ribosomal translocation step during translation elongation. During this step, the ribosome changes from the pre-translocational (PRE) to the post-translocational (POST) state as the newly formed A-site-bound peptidyl-tRNA and P-site-bound deacylated tRNA move to the P and E sites, respectively. Catalyzes the coordinated movement of the two tRNA molecules, the mRNA and conformational changes in the ribosome. The sequence is that of Elongation factor G, mitochondrial (mef1) from Schizosaccharomyces pombe (strain 972 / ATCC 24843) (Fission yeast).